The sequence spans 540 residues: Chaperonin GroEL 4 (540 aa).

ATP is bound by residues 29–32 (TLGP), 86–90 (DGTTT), Gly-413, 477–479 (NAA), and Asp-493.

It belongs to the chaperonin (HSP60) family. As to quaternary structure, forms a cylinder of 14 subunits composed of two heptameric rings stacked back-to-back. Interacts with the co-chaperonin GroES.

Its subcellular location is the cytoplasm. It carries out the reaction ATP + H2O + a folded polypeptide = ADP + phosphate + an unfolded polypeptide.. Its function is as follows. Together with its co-chaperonin GroES, plays an essential role in assisting protein folding. The GroEL-GroES system forms a nano-cage that allows encapsulation of the non-native substrate proteins and provides a physical environment optimized to promote and accelerate protein folding. The chain is Chaperonin GroEL 4 from Frankia casuarinae (strain DSM 45818 / CECT 9043 / HFP020203 / CcI3).